A 68-amino-acid polypeptide reads, in one-letter code: Large ribosomal subunit protein uL29 (68 aa).

Belongs to the universal ribosomal protein uL29 family.

This Albidiferax ferrireducens (strain ATCC BAA-621 / DSM 15236 / T118) (Rhodoferax ferrireducens) protein is Large ribosomal subunit protein uL29.